A 261-amino-acid polypeptide reads, in one-letter code: Small ribosomal subunit protein eS4 (261 aa).

Residues 42–100 (LPLILILRNRLKYALTYREVVSILMQRHILVDGKIHFCIRLSDVVSIPKTNENFRLLYD) form the S4 RNA-binding domain.

Belongs to the eukaryotic ribosomal protein eS4 family.

It is found in the cytoplasm. The sequence is that of Small ribosomal subunit protein eS4 (RPS4) from Prunus armeniaca (Apricot).